The sequence spans 399 residues: MLLTVYCVRRDLSEVTFSLQVDADFELHNFRALCELESGIPAAESQIVYAERPLTDNHRSLASYGLKDGDVVILRQKENADPRPAVQFSNLPRIDFSSIAVPGTSNPQQRQLPRTQAQHSSPGEMASSPQGLDNPALLRDMLLANPHELSLLKERNPPLAEALLSGDLEKFSRVLVEQQQDRARREQERIRLFSADPFDLEAQAKIEEDIRQQNIEENMTIAMEEAPESFGQVAMLYINCRVNGHPVKAFVDSGAQMTIMSQACAERCNIMRLVDRRWAGIAKGVGTQKIIGRVHLAQVQIEGDFLACSFSILEEQPMDMLLGLDMLKRHQCSIDLKKNVLVIGTTGSQTTFLPEGELPECARLAYGTGREDIRPEEIADQELAEAIQKSAEDAERQKP.

A Ubiquitin-like domain is found at 1–81 (MLLTVYCVRR…VILRQKENAD (81 aa)). Positions 99 to 134 (IAVPGTSNPQQRQLPRTQAQHSSPGEMASSPQGLDN) are disordered. Residues 103-131 (GTSNPQQRQLPRTQAQHSSPGEMASSPQG) show a composition bias toward polar residues. At threonine 104 the chain carries Phosphothreonine. Serine 121, serine 128, serine 150, and serine 194 each carry phosphoserine. Aspartate 252 is a catalytic residue. The Ubiquitin-binding motif lies at 376 to 395 (EEIADQELAEAIQKSAEDAE).

This sequence belongs to the DDI1 family. As to quaternary structure, homodimer.

The protein resides in the cytoplasm. It localises to the cytosol. The protein localises to the chromosome. Its function is as follows. Aspartic protease that mediates the cleavage of NFE2L1/NRF1 at 'Leu-104', thereby promoting release of NFE2L1/NRF1 from the endoplasmic reticulum membrane. Ubiquitination of NFE2L1/NRF1 is a prerequisite for cleavage, suggesting that DDI2 specifically recognizes and binds ubiquitinated NFE2L1/NRF1. Seems to act as a proteasomal shuttle which links the proteasome and replication fork proteins like RTF2. Required, with DDI1, for cellular survival following replication stress. Together or redudantly with DDI1, removes RTF2 from stalled forks to allow cell cycle progression after replication stress and maintains genome integrity. This Mus musculus (Mouse) protein is Protein DDI1 homolog 2.